The following is a 426-amino-acid chain: Tyrosine--tRNA ligase (426 aa).

L-tyrosine is bound at residue Tyr37. A 'HIGH' region motif is present at residues 42-51; that stretch reads PTADSLHLGH. Residues Tyr175 and Gln179 each contribute to the L-tyrosine site. Positions 235-239 match the 'KMSKS' region motif; that stretch reads KFGKT. Lys238 is a binding site for ATP. The region spanning 357–415 is the S4 RNA-binding domain; sequence TDLMQALVESELQPSRGQARKAIAANGVTVNGIKQPDPDYVLNENDRYFSNYTLLRRGK.

The protein belongs to the class-I aminoacyl-tRNA synthetase family. TyrS type 1 subfamily. Homodimer.

It localises to the cytoplasm. It carries out the reaction tRNA(Tyr) + L-tyrosine + ATP = L-tyrosyl-tRNA(Tyr) + AMP + diphosphate + H(+). Catalyzes the attachment of tyrosine to tRNA(Tyr) in a two-step reaction: tyrosine is first activated by ATP to form Tyr-AMP and then transferred to the acceptor end of tRNA(Tyr). This Klebsiella pneumoniae (strain 342) protein is Tyrosine--tRNA ligase.